The chain runs to 91 residues: Large ribosomal subunit protein uL23 (91 aa).

Belongs to the universal ribosomal protein uL23 family. As to quaternary structure, part of the 50S ribosomal subunit. Contacts protein L29.

Its function is as follows. Binds to 23S rRNA. One of the proteins that surrounds the polypeptide exit tunnel on the outside of the ribosome. The polypeptide is Large ribosomal subunit protein uL23 (Staphylothermus marinus (strain ATCC 43588 / DSM 3639 / JCM 9404 / F1)).